The sequence spans 121 residues: Large ribosomal subunit protein bL20 (121 aa).

This sequence belongs to the bacterial ribosomal protein bL20 family.

Functionally, binds directly to 23S ribosomal RNA and is necessary for the in vitro assembly process of the 50S ribosomal subunit. It is not involved in the protein synthesizing functions of that subunit. This is Large ribosomal subunit protein bL20 from Persephonella marina (strain DSM 14350 / EX-H1).